The sequence spans 122 residues: Large ribosomal subunit protein uL14 (122 aa).

This sequence belongs to the universal ribosomal protein uL14 family. In terms of assembly, part of the 50S ribosomal subunit. Forms a cluster with proteins L3 and L19. In the 70S ribosome, L14 and L19 interact and together make contacts with the 16S rRNA in bridges B5 and B8.

Its function is as follows. Binds to 23S rRNA. Forms part of two intersubunit bridges in the 70S ribosome. The chain is Large ribosomal subunit protein uL14 from Bordetella parapertussis (strain 12822 / ATCC BAA-587 / NCTC 13253).